Reading from the N-terminus, the 164-residue chain is MVNPTVFFDISADGEPLGRVSFELFADKVPKTAENFRALSTGEKGFGYKGSSFHRIIPGFMCQGGDFTRHNGTGGRSIYGEKFEDENFILKHTGPGILSMANAGPNTNGSQFFICTAKTEWLDGKHVVFGKVKEGMNIVEAMERFGSRNGKTSKKITISDCGQL.

N-acetylmethionine is present on Met1. The residue at position 2 (Val2) is an N-acetylvaline; in Peptidyl-prolyl cis-trans isomerase A, N-terminally processed. Positions 7-163 (FFDISADGEP…KKITISDCGQ (157 aa)) constitute a PPIase cyclophilin-type domain. Lys28 is modified (N6-acetyllysine; alternate). Lys28 is covalently cross-linked (Glycyl lysine isopeptide (Lys-Gly) (interchain with G-Cter in SUMO2); alternate). A Glycyl lysine isopeptide (Lys-Gly) (interchain with G-Cter in ubiquitin); alternate cross-link involves residue Lys28. Lys44 bears the N6-acetyllysine mark. Ser77 bears the Phosphoserine mark. Residue Lys82 is modified to N6-acetyllysine; alternate. Lys82 participates in a covalent cross-link: Glycyl lysine isopeptide (Lys-Gly) (interchain with G-Cter in SUMO2); alternate. Residue Thr93 is modified to Phosphothreonine. Asn108 carries N-linked (GlcNAc...) asparagine glycosylation. An N6-acetyllysine mark is found at Lys125, Lys131, and Lys133.

This sequence belongs to the cyclophilin-type PPIase family. PPIase A subfamily. In terms of assembly, interacts with protein phosphatase PPP3CA/calcineurin A. Interacts with PRPF19 isoform 2 (via N-terminus). Interacts with isoform 2 of BSG/CD147. Interacts with FOXO1; the interaction promotes FOXO1 dephosphorylation, nuclear accumulation and transcriptional activity. Interacts with integrin ITGA2B:ITGB3; the interaction is ROS and peptidyl-prolyl cis-trans isomerase (PPIase) activity-dependent and is increased in the presence of thrombin. Interacts with MAP3K5. Interacts with TARDBP; the interaction is dependent on the RNA-binding activity of TARDBP and the PPIase activity of PPIA/CYPA and the acetylation of PPIA/CYPA at Lys-125 favors the interaction. Interacts with HNRNPA1, HNRNPA2B1, HNRNPC, RBMX, HNRNPK and HNRNPM. In terms of processing, acetylation at Lys-125 markedly inhibits catalysis of cis to trans isomerization. PPIA acetylation also antagonizes the immunosuppressive effects of cyclosporine by inhibiting the sequential steps of cyclosporine binding and calcineurin inhibition. Acetylation at Lys-125 favors the interaction with TARDBP.

It is found in the cytoplasm. The protein resides in the secreted. It localises to the nucleus. The catalysed reaction is [protein]-peptidylproline (omega=180) = [protein]-peptidylproline (omega=0). With respect to regulation, binds cyclosporin A (CsA). CsA mediates some of its effects via an inhibitory action on PPIase. In terms of biological role, catalyzes the cis-trans isomerization of proline imidic peptide bonds in oligopeptides. Exerts a strong chemotactic effect on leukocytes partly through activation of one of its membrane receptors BSG/CD147, initiating a signaling cascade that culminates in MAPK/ERK activation. Activates endothelial cells (ECs) in a proinflammatory manner by stimulating activation of NF-kappa-B and ERK, JNK and p38 MAP-kinases and by inducing expression of adhesion molecules including SELE and VCAM1. Induces apoptosis in ECs by promoting the FOXO1-dependent expression of CCL2 and BCL2L11 which are involved in EC chemotaxis and apoptosis. In response to oxidative stress, initiates proapoptotic and antiapoptotic signaling in ECs via activation of NF-kappa-B and AKT1 and up-regulation of antiapoptotic protein BCL2. Negatively regulates MAP3K5/ASK1 kinase activity, autophosphorylation and oxidative stress-induced apoptosis mediated by MAP3K5/ASK1. Necessary for the assembly of TARDBP in heterogeneous nuclear ribonucleoprotein (hnRNP) complexes and regulates TARDBP binding to RNA UG repeats and TARDBP-dependent expression of HDAC6, ATG7 and VCP which are involved in clearance of protein aggregates. Plays an important role in platelet activation and aggregation. Regulates calcium mobilization and integrin ITGA2B:ITGB3 bidirectional signaling via increased ROS production as well as by facilitating the interaction between integrin and the cell cytoskeleton. Binds heparan sulfate glycosaminoglycans. The sequence is that of Peptidyl-prolyl cis-trans isomerase A (PPIA) from Cricetulus griseus (Chinese hamster).